The chain runs to 211 residues: MADDELETYRLWRIRKTVLQMVHDRGYLVAQEELDQPLETFKETFGDRPSEKKPARSDLTILVAHNDDPADQMFVFFPEDTKIGIKTIKAICQQMQEQNISRAIIVVQTGMTPSAKQSIGDMAPKYMLEHFLEAELMVNITEHELVPEHVVMTAEEKAELLARYKLKDSQLPRIQQCDPVARYFGLRRGQVVKIIRPSETAGRYITYRLVV.

It belongs to the archaeal Rpo5/eukaryotic RPB5 RNA polymerase subunit family. In terms of assembly, component of the RNA polymerase I (Pol I), RNA polymerase II (Pol II) and RNA polymerase III (Pol III) complexes consisting of at least 13, 12 and 17 subunits, respectively. In RNA Pol II, this subunit is present in 2-fold molar excess over the other subunits.

It localises to the nucleus. In terms of biological role, DNA-dependent RNA polymerase catalyzes the transcription of DNA into RNA using the four ribonucleoside triphosphates as substrates. Common component of RNA polymerases I, II and III which synthesize ribosomal RNA precursors, mRNA precursors and many functional non-coding RNAs, and small RNAs, such as 5S rRNA and tRNAs, respectively. Pol II is the central component of the basal RNA polymerase II transcription machinery. Pols are composed of mobile elements that move relative to each other. In Pol II, RPB5 is part of the lower jaw surrounding the central large cleft and thought to grab the incoming DNA template. Seems to be the major component in this process. This Caenorhabditis briggsae protein is DNA-directed RNA polymerases I, II, and III subunit RPABC1.